A 221-amino-acid chain; its full sequence is PKHD-type hydroxylase PMN2A_0775 (221 aa).

One can recognise a Fe2OG dioxygenase domain in the interval 80-174 (LIHGVMFTQS…RHVCVGWIQS (95 aa)). H98, D100, and H155 together coordinate Fe cation. A 2-oxoglutarate-binding site is contributed by R165.

Fe(2+) is required as a cofactor. It depends on L-ascorbate as a cofactor.

This Prochlorococcus marinus (strain NATL2A) protein is PKHD-type hydroxylase PMN2A_0775.